The following is a 76-amino-acid chain: Cytochrome c oxidase subunit 6C (76 aa).

The Mitochondrial matrix portion of the chain corresponds to 4–22 (GALLPKPQMRGLLAKRLRV). The chain crosses the membrane as a helical span at residues 23–44 (HIAGAFIVALGVAAAYKFGVAE). Topologically, residues 45 to 76 (PRKKAYAEFYRNYDSMKDFEEMRKAGIFQSAK) are mitochondrial intermembrane.

Belongs to the cytochrome c oxidase subunit 6c family. In terms of assembly, component of the cytochrome c oxidase (complex IV, CIV), a multisubunit enzyme composed of 14 subunits. The complex is composed of a catalytic core of 3 subunits MT-CO1, MT-CO2 and MT-CO3, encoded in the mitochondrial DNA, and 11 supernumerary subunits COX4I, COX5A, COX5B, COX6A, COX6B, COX6C, COX7A, COX7B, COX7C, COX8 and NDUFA4, which are encoded in the nuclear genome. The complex exists as a monomer or a dimer and forms supercomplexes (SCs) in the inner mitochondrial membrane with NADH-ubiquinone oxidoreductase (complex I, CI) and ubiquinol-cytochrome c oxidoreductase (cytochrome b-c1 complex, complex III, CIII), resulting in different assemblies (supercomplex SCI(1)III(2)IV(1) and megacomplex MCI(2)III(2)IV(2)). Acetylation of Lys-61 is observed in liver mitochondria from fasted mice but not from fed mice.

Its subcellular location is the mitochondrion inner membrane. Its pathway is energy metabolism; oxidative phosphorylation. Its function is as follows. Component of the cytochrome c oxidase, the last enzyme in the mitochondrial electron transport chain which drives oxidative phosphorylation. The respiratory chain contains 3 multisubunit complexes succinate dehydrogenase (complex II, CII), ubiquinol-cytochrome c oxidoreductase (cytochrome b-c1 complex, complex III, CIII) and cytochrome c oxidase (complex IV, CIV), that cooperate to transfer electrons derived from NADH and succinate to molecular oxygen, creating an electrochemical gradient over the inner membrane that drives transmembrane transport and the ATP synthase. Cytochrome c oxidase is the component of the respiratory chain that catalyzes the reduction of oxygen to water. Electrons originating from reduced cytochrome c in the intermembrane space (IMS) are transferred via the dinuclear copper A center (CU(A)) of subunit 2 and heme A of subunit 1 to the active site in subunit 1, a binuclear center (BNC) formed by heme A3 and copper B (CU(B)). The BNC reduces molecular oxygen to 2 water molecules using 4 electrons from cytochrome c in the IMS and 4 protons from the mitochondrial matrix. In Mus musculus (Mouse), this protein is Cytochrome c oxidase subunit 6C (Cox6c).